A 501-amino-acid polypeptide reads, in one-letter code: Beta-secretase 1 (501 aa).

The signal sequence occupies residues 1 to 21 (MAPALHWLLLWVGSGMLPAQG). A propeptide spanning residues 22-45 (THLGIRLPLRSGLAGPPLGLRLPR) is cleaved from the precursor. The Extracellular portion of the chain corresponds to 22–457 (THLGIRLPLR…PQTDESTLMT (436 aa)). Residues 39–58 (LGLRLPRETDEESEEPGRRG) form a disordered region. The Peptidase A1 domain maps to 75–416 (YYVEMTVGSP…DRARKRIGFA (342 aa)). D93 is a catalytic residue. N6-acetyllysine is present on K126. 3 N-linked (GlcNAc...) asparagine glycosylation sites follow: N153, N172, and N223. 3 disulfides stabilise this stretch: C216/C420, C278/C443, and C330/C380. N6-acetyllysine occurs at positions 275, 279, and 285. Residue D289 is part of the active site. N6-acetyllysine is present on residues K299, K300, and K307. N-linked (GlcNAc...) asparagine glycosylation occurs at N354. The helical transmembrane segment at 458-478 (IAYVMAAICALFMLPLCLMVC) threads the bilayer. 4 S-palmitoyl cysteine lipidation sites follow: C474, C478, C482, and C485. Residues 479-501 (QWRCLRCLRHQHDDFADDISLLK) are Cytoplasmic-facing. The segment at 479 to 501 (QWRCLRCLRHQHDDFADDISLLK) is interaction with RTN3. The DXXLL motif lies at 496–500 (DISLL). S498 carries the post-translational modification Phosphoserine. A Glycyl lysine isopeptide (Lys-Gly) (interchain with G-Cter in ubiquitin) cross-link involves residue K501.

This sequence belongs to the peptidase A1 family. Monomer. Interacts (via DXXLL motif) with GGA1, GGA2 and GGA3 (via their VHS domain); the interaction highly increases when BACE1 is phosphorylated at Ser-498. Interacts with RTN1; RTN2; RTN3 and RTN4; the interaction leads to inhibition of amyloid precursor protein processing. Interacts with SNX6. Interacts with PCSK9. Interacts with NAT8 and NAT8B. Interacts with BIN1. Interacts (via extracellular domain) with ADAM10 (via extracellular domain). Interacts with SORL1; this interaction may affect binding with APP and hence reduce APP cleavage. Interacts with NRDC AND NRG1. N-Glycosylated. Addition of a bisecting N-acetylglucosamine by MGAT3 blocks lysosomal targeting, further degradation and is required for maintaining stability under stress conditions. In terms of processing, palmitoylation mediates lipid raft localization. Post-translationally, acetylated in the endoplasmic reticulum at Lys-126, Lys-275, Lys-279, Lys-285, Lys-299, Lys-300 and Lys-307. Acetylation by NAT8 and NAT8B is transient and deacetylation probably occurs in the Golgi. Acetylation regulates the maturation, the transport to the plasma membrane, the stability and the expression of the protein. Ubiquitinated at Lys-501, ubiquitination leads to lysosomal degradation. Monoubiquitinated and 'Lys-63'-linked polyubitinated. Deubiquitnated by USP8; inhibits lysosomal degradation. In terms of processing, phosphorylation at Ser-498 is required for interaction with GGA1 and retrograded transport from endosomal compartments to the trans-Golgi network. Non-phosphorylated BACE1 enters a direct recycling route to the cell surface. As to expression, expressed in the brain, specifically in neurons and astrocytes (at protein level).

It is found in the cell membrane. The protein localises to the golgi apparatus. The protein resides in the trans-Golgi network. It localises to the endoplasmic reticulum. Its subcellular location is the endosome. It is found in the late endosome. The protein localises to the early endosome. The protein resides in the cell surface. It localises to the cytoplasmic vesicle membrane. Its subcellular location is the membrane raft. It is found in the lysosome. The protein localises to the recycling endosome. The protein resides in the cell projection. It localises to the axon. Its subcellular location is the dendrite. It carries out the reaction Broad endopeptidase specificity. Cleaves Glu-Val-Asn-Leu-|-Asp-Ala-Glu-Phe in the Swedish variant of Alzheimer's amyloid precursor protein.. Its activity is regulated as follows. Inhibited by RTN3 and RTN4. Functionally, responsible for the proteolytic processing of the amyloid precursor protein (APP). Cleaves at the N-terminus of the A-beta peptide sequence, between residues 671 and 672 of APP, leads to the generation and extracellular release of beta-cleaved soluble APP, and a corresponding cell-associated C-terminal fragment which is later released by gamma-secretase. Cleaves CHL1. In Mus musculus (Mouse), this protein is Beta-secretase 1.